A 1179-amino-acid chain; its full sequence is Serine/threonine-protein kinase pakG (1179 aa).

Residues 12-53 adopt a coiled-coil conformation; sequence SKTNEDIELIKQKLKEDRELLEKERAQFEEERKIIFESLNKV. A CRIB domain is found at 111–124; sequence IGTPFNVQHKVHVD. Positions 139 to 390 constitute a Protein kinase domain; sequence FLIDCILGTG…AIELLTHPFL (252 aa). Residues 145-153 and K168 each bind ATP; that span reads LGTGSYGTV. D257 serves as the catalytic Proton acceptor. Disordered stretches follow at residues 414–469, 589–631, 705–1086, and 1121–1179; these read KKKK…SSLD, IGNS…NNNN, SSSS…PITL, and TEIN…SPKK. A coiled-coil region spans residues 621 to 668; it reads NNNNNNNNNNNEFLINQIKKELILDFNENMKQYINQQLTNLKEEMLKE. 2 stretches are compositionally biased toward low complexity: residues 705-723 and 743-761; these read SSSS…SNSS and LPPS…TSSP. The span at 762–776 shows a compositional bias: pro residues; that stretch reads SPSPSPSPSPSPSSP. Composition is skewed to low complexity over residues 777 to 788 and 812 to 833; these read LPSSSTSTVNTP and NNNN…NNNN. A compositionally biased stretch (polar residues) spans 834 to 857; the sequence is VIQSPKLNNRPLSPTTPTKQFNNR. Low complexity predominate over residues 864–891; that stretch reads FNNRPPSPSKFNNRPPSPSNRPLSPKNS. The span at 892–946 shows a compositional bias: polar residues; sequence YNSLEKSNNGSISNNRPLSPKNSLEKSTTQNNTSSEDISTTTVTVTSEQGGTPIT. A compositionally biased stretch (pro residues) spans 954–963; that stretch reads RPKPSPPPIP. 3 stretches are compositionally biased toward low complexity: residues 964 to 997, 1024 to 1046, and 1053 to 1077; these read MNKS…TIAA, TTIT…SPNS, and ITTS…SSSN. Over residues 1121–1135 the composition is skewed to polar residues; that stretch reads TEINLPSSSPSTPQK. A compositionally biased stretch (low complexity) spans 1137 to 1158; that stretch reads NTPSSIPTTPTTPTTNGGSVSS.

The protein belongs to the protein kinase superfamily. STE Ser/Thr protein kinase family. STE20 subfamily. The cofactor is Mg(2+).

The enzyme catalyses L-seryl-[protein] + ATP = O-phospho-L-seryl-[protein] + ADP + H(+). It carries out the reaction L-threonyl-[protein] + ATP = O-phospho-L-threonyl-[protein] + ADP + H(+). The chain is Serine/threonine-protein kinase pakG from Dictyostelium discoideum (Social amoeba).